The sequence spans 202 residues: Protein FAR-RED ELONGATED HYPOCOTYL 1 (202 aa).

Serine 39 is modified (phosphoserine). The short motif at lysine 40–lysine 43 is the Nuclear localization sequence (NLS) element. Residues leucine 54–leucine 57 carry the Nuclear export sequence (NES) motif. Threonine 61 carries the post-translational modification Phosphothreonine.

It belongs to the FHY1 protein family. As to quaternary structure, homodimer and heterodimer with FHL. Interacts with underphosphorylated PHYA, especially upon far-red (FR) light illumination. Binds to LAF1 and HFR1. Forms PHYA/FHY1/HFR1 complex in darkness but dissociates from PHYA and HFR1 in response to continuous FR light (FRc). Inactivated by rapid reversible PHYA-mediated phosphorylation at Ser-39 and Thr-61 in red light (R), thus inhibiting PHYA signaling in a negative feedback loop; this ensures the seedling deetiolation process in response to a R-enriched light condition. Subsequent exposure to far-red light (FR) after the R conditions leads to dephosphorylation. The phosphorylated form is cytoplasmic only and unable to bind to chromatin at direct target genes whereas the unphosphorylated form can shuttle from cytoplasm to nucleus. As to expression, expressed in hypocotyl cells of etiolated plants.

The protein resides in the nucleus. The protein localises to the cytoplasm. Its function is as follows. Key regulator of far red / red (FR/R) spectrum-specific responses essential for the adaption to changing light conditions (e.g. de-etiolation), essentially by regulating PHYA shuttling from the cytoplasm to the nucleus and by directly regulating the expression of some target genes, depending on light conditions and phosphorylation status. Binds chromatin at target genes promoters, especially in FR light conditions. Can activate transcription of different genes, some being in a phytochrome A (PHYA)-dependent and other in a PHYA-independent manners. Controls specific aspects of plant development, such as the inhibition of seed germination under FR during salt stress. Essential for light-regulated PHYA nuclear accumulation and subsequent PHYA phototropic signaling processes involved in photomorphogenesis. Mediates the association of PHYA with HFR1 and LAF1 in the nucleus in response to FR conditions. PHYA-specific signal transducer in response to continuous FR lights. Contributes to inhibition of hypocotyl elongation in continuous blue light (B). This chain is Protein FAR-RED ELONGATED HYPOCOTYL 1, found in Arabidopsis thaliana (Mouse-ear cress).